The chain runs to 337 residues: Peptide methionine sulfoxide reductase MsrA/MsrB (337 aa).

The peptide methionine sulfoxide reductase A stretch occupies residues 28–181; it reads KDIYLAGGCF…PGGYCHVDLS (154 aa). Cys36 is a catalytic residue. Residues 198–321 form the MsrB domain; the sequence is KDELKAKLSD…NGASLKFIPL (124 aa). Cys310 (nucleophile) is an active-site residue.

The protein in the N-terminal section; belongs to the MsrA Met sulfoxide reductase family. This sequence in the C-terminal section; belongs to the MsrB Met sulfoxide reductase family.

The catalysed reaction is L-methionyl-[protein] + [thioredoxin]-disulfide + H2O = L-methionyl-(S)-S-oxide-[protein] + [thioredoxin]-dithiol. It catalyses the reaction [thioredoxin]-disulfide + L-methionine + H2O = L-methionine (S)-S-oxide + [thioredoxin]-dithiol. It carries out the reaction L-methionyl-[protein] + [thioredoxin]-disulfide + H2O = L-methionyl-(R)-S-oxide-[protein] + [thioredoxin]-dithiol. In terms of biological role, has an important function as a repair enzyme for proteins that have been inactivated by oxidation. Catalyzes the reversible oxidation-reduction of methionine sulfoxide in proteins to methionine. In Campylobacter fetus, this protein is Peptide methionine sulfoxide reductase MsrA/MsrB (msrAB).